The sequence spans 198 residues: Probable thymidylate kinase (198 aa).

9–16 (GIDGSGKT) contacts ATP.

It belongs to the thymidylate kinase family.

The catalysed reaction is dTMP + ATP = dTDP + ADP. The chain is Probable thymidylate kinase from Methanococcus vannielii (strain ATCC 35089 / DSM 1224 / JCM 13029 / OCM 148 / SB).